Reading from the N-terminus, the 1003-residue chain is PHD finger protein 12 (1003 aa).

Positions 29 to 59 (APPKTDEAEKRSRKPEKESRRSGRATNHDSC) are disordered. The span at 32–59 (KTDEAEKRSRKPEKESRRSGRATNHDSC) shows a compositional bias: basic and acidic residues. A PHD-type 1 zinc finger spans residues 56 to 105 (HDSCDSCKEGGDLLCCDHCPAAFHLQCCNPPLSEEMLPPGEWMCHRCTVR). 5 residues coordinate Zn(2+): Cys59, Ser61, Cys62, His79, and Cys82. Disordered stretches follow at residues 110–183 (EQKK…HNDV) and 234–255 (TTAL…KNVK). Phosphoserine is present on residues Ser131 and Ser134. Residues 138-161 (LLDRPASKTELKAIAHARILERRA) are compositionally biased toward basic and acidic residues. The segment covering 165–178 (GTPTSNASTETPTS) has biased composition (polar residues). Positions 202 to 241 (VQPQLRRPFELLIAAAMERNPTQFQLPNELTCTTALPGSS) are SIN3 interacting domain 1. A PHD-type 2; atypical zinc finger spans residues 271–321 (VKVCFTCNRSCRVAPLIQCDYCPLLFHMDCLEPPLTAMPLGRWMCPNHIEH). 8 residues coordinate Zn(2+): Cys274, Cys277, Cys289, Cys292, His297, Cys300, Cys315, and His318. The tract at residues 328–364 (NLTLSNRCQVFDRFQDTISQHVVKVDFLNRIHKKHPP) is SIN3 interacting domain 2. A Glycyl lysine isopeptide (Lys-Gly) (interchain with G-Cter in SUMO2) cross-link involves residue Lys467. Disordered stretches follow at residues 531 to 583 (KAPC…GWPR) and 641 to 671 (HRKT…VLTP). Ser555 carries the phosphoserine modification. 2 positions are modified to phosphothreonine: Thr557 and Thr570. Over residues 641–656 (HRKTVQSQIGPSSTES) the composition is skewed to polar residues. A Phosphothreonine modification is found at Thr670. Positions 814–868 (LYIGTGADMDVCLTNYGHCNYVSGKHACIFYDENTKHYELLNYSEHGTTVDNVLY) constitute an FHA domain. The segment at 894 to 922 (RRRHQKQDEEPSEEAAMMSSQAQGPQRRP) is disordered. Lys899 participates in a covalent cross-link: Glycyl lysine isopeptide (Lys-Gly) (interchain with G-Cter in SUMO2). A compositionally biased stretch (low complexity) spans 907-916 (EAAMMSSQAQ). Residues Lys972, Lys986, and Lys990 each participate in a glycyl lysine isopeptide (Lys-Gly) (interchain with G-Cter in SUMO2) cross-link.

In terms of assembly, component of SIN3 complexes. Interacts with SIN3A in a complex composed of HDAC1, SAP30 and SIN3A. Component of the SIN3B complex, which includes SIN3B, HDAC2 or HDAC1, PHF12 and MORF4L1; interacts directly with all subunits. Interacts with TLE5. Expressed mainly in heart, brain, lung, liver and testis.

Its subcellular location is the nucleus. Its function is as follows. Transcriptional repressor acting as key scaffolding subunit of SIN3 complexes which contributes to complex assembly by contacting each core subunit domain, stabilizes the complex and constitutes the substrate receptor by recruiting the H3 histone tail. SIN3 complexes are composed of a SIN3 scaffold subunit, one catalytic core (HDAC1 or HDAC2) and 2 chromatin targeting modules. SIN3B complex represses transcription and counteracts the histone acetyltransferase activity of EP300 through the recognition H3K27ac marks by PHF12 and the activity of the histone deacetylase HDAC2. SIN3B complex is recruited downstream of the constitutively active genes transcriptional start sites through interaction with histones and mitigates histone acetylation and RNA polymerase II progression within transcribed regions contributing to the regulation of transcription. May also repress transcription in a SIN3A-independent manner through recruitment of functional TLE5 complexes to DNA. May also play a role in ribosomal biogenesis. The polypeptide is PHD finger protein 12 (Mus musculus (Mouse)).